We begin with the raw amino-acid sequence, 310 residues long: Vomeronasal type-1 receptor 50 (310 aa).

Over 1 to 16 the chain is Extracellular; the sequence is MSKANLLHTDNNMKIT. The chain crosses the membrane as a helical span at residues 17 to 37; sequence LFSEVSVGISANSILFVVHLC. The Cytoplasmic portion of the chain corresponds to 38–50; sequence KLLHENKPKPIDL. The chain crosses the membrane as a helical span at residues 51 to 71; it reads YIAFFSITQLMLLITMGLIAV. The Extracellular segment spans residues 72-93; that stretch reads DMFMPWGRWDSTTCQSLIYLHR. A disulfide bridge links cysteine 85 with cysteine 172. A helical transmembrane segment spans residues 94–114; sequence LLRGLTFCATCLLNVLWTITL. Residues 115-134 are Cytoplasmic-facing; sequence SPRSSCLTKFKHKSPHHISG. A helical transmembrane segment spans residues 135–155; it reads AFLFFCVLYMSFSSHLLVSII. Residues 156 to 193 lie on the Extracellular side of the membrane; the sequence is ATFNSTSDNFLYVTQSCSILPVSYSRTSILSTMMTMRE. N-linked (GlcNAc...) asparagine glycosylation occurs at asparagine 159. The helical transmembrane segment at 194–214 threads the bilayer; the sequence is AFLIGLMALSSGYVVVLLWRH. Residues 215–237 are Cytoplasmic-facing; that stretch reads KKQARHLHSTSLSSKASPEQRAT. Residues 238–258 traverse the membrane as a helical segment; sequence STIMLLMGFFVVLYILDTVIF. At 259–269 the chain is on the extracellular side; that stretch reads QARLKFKDVST. A helical membrane pass occupies residues 270-290; the sequence is FFCVKIIISHSYATFSPFVFI. At 291 to 310 the chain is on the cytoplasmic side; that stretch reads CNDKYMIKFVTSMCGRIVNV.

Belongs to the G-protein coupled receptor 1 family. In terms of tissue distribution, expressed in a subset of sensory neurons located in the apical layer of the vomeronasal organ.

The protein resides in the cell membrane. In terms of biological role, putative pheromone receptor implicated in the regulation of social and reproductive behavior. The protein is Vomeronasal type-1 receptor 50 (Vmn1r50) of Mus musculus (Mouse).